We begin with the raw amino-acid sequence, 89 residues long: Large ribosomal subunit protein bL27 (89 aa).

A disordered region spans residues 1-20 (MAHKKAGGSSRNGRDSAGRR).

It belongs to the bacterial ribosomal protein bL27 family.

The polypeptide is Large ribosomal subunit protein bL27 (Jannaschia sp. (strain CCS1)).